Consider the following 239-residue polypeptide: Ribose-5-phosphate isomerase A (239 aa).

Substrate contacts are provided by residues 40–43, 96–99, and 110–113; these read SGST, DGAD, and KGGG. Residue Glu-119 is the Proton acceptor of the active site. Residue Lys-137 coordinates substrate.

Belongs to the ribose 5-phosphate isomerase family. In terms of assembly, homodimer.

It catalyses the reaction aldehydo-D-ribose 5-phosphate = D-ribulose 5-phosphate. Its pathway is carbohydrate degradation; pentose phosphate pathway; D-ribose 5-phosphate from D-ribulose 5-phosphate (non-oxidative stage): step 1/1. Catalyzes the reversible conversion of ribose-5-phosphate to ribulose 5-phosphate. This chain is Ribose-5-phosphate isomerase A, found in Methanococcus vannielii (strain ATCC 35089 / DSM 1224 / JCM 13029 / OCM 148 / SB).